Reading from the N-terminus, the 426-residue chain is Protein prenyltransferase alpha subunit repeat-containing protein 1 (426 aa).

4 PFTA repeats span residues 86 to 119 (ALVD…VLNP), 121 to 154 (KDLY…QKEC), 180 to 213 (EEMR…AKGN), and 219 to 252 (DELS…AKEL). The tract at residues 255–279 (AAEKDVHTSQQPNGENTATASDDNH) is disordered. Polar residues predominate over residues 262 to 275 (TSQQPNGENTATAS). One copy of the PFTA 5 repeat lies at 290–323 (EEIQLCTDLIESYPGHETLWCHRRHVFYLWHQWR).

Belongs to the protein prenyltransferase subunit alpha family.

The protein is Protein prenyltransferase alpha subunit repeat-containing protein 1 (ptar1) of Danio rerio (Zebrafish).